The sequence spans 133 residues: Profilin (133 aa).

Belongs to the profilin family.

More likely to influence phosphoinositide metabolism than actin assembly. The polypeptide is Profilin (Cowpox virus (strain GRI-90 / Grishak) (CPV)).